A 783-amino-acid polypeptide reads, in one-letter code: Glucosidase YgjK (783 aa).

Positions 1-22 are cleaved as a signal peptide; that stretch reads MKIKTILTPVTCALLISFSAHA. The tract at residues 24 to 254 is N-terminal domain; sequence NADNYKNVIN…TTLYTTYSHL (231 aa). Residues 254–299 are linker; sequence LLTAQEVSKEQMQIRDILARPAFYLTASQQRWEEYLKKGLTNPDAT. Residues 300–783 are a domain; the sequence is PEQTRVAVKA…MLYNDFFRKQ (484 aa). Residues D454, N456, N458, V460, and E462 each contribute to the Ca(2+) site. The active-site Proton donor is D524. Residue E572 coordinates Ca(2+). The active-site Proton acceptor is E750.

Belongs to the glycosyl hydrolase 63 family.

In terms of biological role, glucoside hydrolase that cleaves the alpha-1,3-glucosidic linkage in nigerose. Has very low activity towards maltooligosaccharides, soluble starch, nigerotriose, kojibiose and trehalose. The sequence is that of Glucosidase YgjK (ygjK) from Escherichia coli (strain K12).